We begin with the raw amino-acid sequence, 251 residues long: Hydroxyacylglutathione hydrolase (251 aa).

Zn(2+) contacts are provided by histidine 54, histidine 56, aspartate 58, histidine 59, histidine 113, aspartate 140, and histidine 178.

It belongs to the metallo-beta-lactamase superfamily. Glyoxalase II family. In terms of assembly, monomer. Requires Zn(2+) as cofactor.

The catalysed reaction is an S-(2-hydroxyacyl)glutathione + H2O = a 2-hydroxy carboxylate + glutathione + H(+). It participates in secondary metabolite metabolism; methylglyoxal degradation; (R)-lactate from methylglyoxal: step 2/2. Thiolesterase that catalyzes the hydrolysis of S-D-lactoyl-glutathione to form glutathione and D-lactic acid. The sequence is that of Hydroxyacylglutathione hydrolase from Synechococcus sp. (strain CC9902).